Here is a 251-residue protein sequence, read N- to C-terminus: CDP-diacylglycerol pyrophosphatase (251 aa).

The chain crosses the membrane as a helical span at residues 4–24; it reads AGLLFLVMIVIAVVAAGIGYW.

It belongs to the Cdh family.

The protein localises to the cell inner membrane. The catalysed reaction is a CDP-1,2-diacyl-sn-glycerol + H2O = a 1,2-diacyl-sn-glycero-3-phosphate + CMP + 2 H(+). It functions in the pathway phospholipid metabolism; CDP-diacylglycerol degradation; phosphatidate from CDP-diacylglycerol: step 1/1. In Escherichia coli O7:K1 (strain IAI39 / ExPEC), this protein is CDP-diacylglycerol pyrophosphatase.